Consider the following 279-residue polypeptide: Presqualene diphosphate synthase (279 aa).

It belongs to the phytoene/squalene synthase family. HpnD subfamily.

The catalysed reaction is 2 (2E,6E)-farnesyl diphosphate = presqualene diphosphate + diphosphate. It functions in the pathway secondary metabolite biosynthesis; hopanoid biosynthesis. Functionally, involved in the biosynthesis of the hopanoid precursor squalene (SQ) from farnesyl diphosphate (FPP). Catalyzes the first step, the formation of presqualene diphosphate (PSPP) from two molecules of FPP. This chain is Presqualene diphosphate synthase, found in Sinorhizobium fredii (strain NBRC 101917 / NGR234).